The following is a 521-amino-acid chain: Glucose-6-phosphate isomerase (521 aa).

E351 acts as the Proton donor in catalysis. Active-site residues include H382 and K491.

It belongs to the GPI family.

It localises to the cytoplasm. It catalyses the reaction alpha-D-glucose 6-phosphate = beta-D-fructose 6-phosphate. It functions in the pathway carbohydrate biosynthesis; gluconeogenesis. It participates in carbohydrate degradation; glycolysis; D-glyceraldehyde 3-phosphate and glycerone phosphate from D-glucose: step 2/4. In terms of biological role, catalyzes the reversible isomerization of glucose-6-phosphate to fructose-6-phosphate. In Polaromonas naphthalenivorans (strain CJ2), this protein is Glucose-6-phosphate isomerase.